Here is a 406-residue protein sequence, read N- to C-terminus: Cysteine desulfurase (406 aa).

The residue at position 226 (lysine 226) is an N6-(pyridoxal phosphate)lysine. Cysteine 364 (cysteine persulfide intermediate) is an active-site residue.

Belongs to the class-V pyridoxal-phosphate-dependent aminotransferase family. Csd subfamily. As to quaternary structure, homodimer. Interacts with SufE and the SufBCD complex composed of SufB, SufC and SufD. The interaction with SufE is required to mediate the direct transfer of the sulfur atom from the S-sulfanylcysteine. The cofactor is pyridoxal 5'-phosphate.

It is found in the cytoplasm. It carries out the reaction (sulfur carrier)-H + L-cysteine = (sulfur carrier)-SH + L-alanine. The enzyme catalyses L-selenocysteine + AH2 = hydrogenselenide + L-alanine + A + H(+). It functions in the pathway cofactor biosynthesis; iron-sulfur cluster biosynthesis. Cysteine desulfurases mobilize the sulfur from L-cysteine to yield L-alanine, an essential step in sulfur metabolism for biosynthesis of a variety of sulfur-containing biomolecules. Component of the suf operon, which is activated and required under specific conditions such as oxidative stress and iron limitation. Acts as a potent selenocysteine lyase in vitro, that mobilizes selenium from L-selenocysteine. Selenocysteine lyase activity is however unsure in vivo. The chain is Cysteine desulfurase from Escherichia fergusonii (strain ATCC 35469 / DSM 13698 / CCUG 18766 / IAM 14443 / JCM 21226 / LMG 7866 / NBRC 102419 / NCTC 12128 / CDC 0568-73).